The primary structure comprises 449 residues: Allantoinase (449 aa).

His59, His61, Lys146, His182, His238, and Asp311 together coordinate Zn(2+). The residue at position 146 (Lys146) is an N6-carboxylysine.

The protein belongs to the metallo-dependent hydrolases superfamily. Allantoinase family. Homotetramer. Requires Zn(2+) as cofactor. Post-translationally, carboxylation allows a single lysine to coordinate two zinc ions.

The enzyme catalyses (S)-allantoin + H2O = allantoate + H(+). The protein operates within nitrogen metabolism; (S)-allantoin degradation; allantoate from (S)-allantoin: step 1/1. Its function is as follows. Catalyzes the conversion of allantoin (5-ureidohydantoin) to allantoic acid by hydrolytic cleavage of the five-member hydantoin ring. This chain is Allantoinase, found in Deinococcus geothermalis (strain DSM 11300 / CIP 105573 / AG-3a).